Here is a 345-residue protein sequence, read N- to C-terminus: tRNA N6-adenosine threonylcarbamoyltransferase (345 aa).

Positions 111 and 115 each coordinate Fe cation. Residues 134 to 138 (LVSGG), Asp-167, Gly-180, and Asn-276 contribute to the substrate site. Asp-304 is a binding site for Fe cation.

Belongs to the KAE1 / TsaD family. Fe(2+) serves as cofactor.

The protein resides in the cytoplasm. The catalysed reaction is L-threonylcarbamoyladenylate + adenosine(37) in tRNA = N(6)-L-threonylcarbamoyladenosine(37) in tRNA + AMP + H(+). In terms of biological role, required for the formation of a threonylcarbamoyl group on adenosine at position 37 (t(6)A37) in tRNAs that read codons beginning with adenine. Is involved in the transfer of the threonylcarbamoyl moiety of threonylcarbamoyl-AMP (TC-AMP) to the N6 group of A37, together with TsaE and TsaB. TsaD likely plays a direct catalytic role in this reaction. The polypeptide is tRNA N6-adenosine threonylcarbamoyltransferase (Bordetella avium (strain 197N)).